We begin with the raw amino-acid sequence, 303 residues long: Recombination-associated protein RdgC (303 aa).

It belongs to the RdgC family.

It is found in the cytoplasm. It localises to the nucleoid. In terms of biological role, may be involved in recombination. The chain is Recombination-associated protein RdgC from Shewanella piezotolerans (strain WP3 / JCM 13877).